We begin with the raw amino-acid sequence, 57 residues long: Potassium channel toxin alpha-KTx 17.2 (57 aa).

The signal sequence occupies residues 1-26 (MKTIIVLLLLTIVAAAVVESSPKARR). 3 disulfide bridges follow: cysteine 30–cysteine 46, cysteine 36–cysteine 51, and cysteine 40–cysteine 53.

It belongs to the short scorpion toxin superfamily. Potassium channel inhibitor family. Alpha-KTx 17 subfamily. In terms of tissue distribution, expressed by the venom gland.

It is found in the secreted. In terms of biological role, inhibits voltage-gated potassium channels. The sequence is that of Potassium channel toxin alpha-KTx 17.2 from Lychas mucronatus (Chinese swimming scorpion).